We begin with the raw amino-acid sequence, 466 residues long: Ribulose bisphosphate carboxylase large chain (466 aa).

An N6,N6,N6-trimethyllysine modification is found at K5. N114 and T164 together coordinate substrate. K166 serves as the catalytic Proton acceptor. K168 is a binding site for substrate. Positions 192, 194, and 195 each coordinate Mg(2+). K192 bears the N6-carboxylysine mark. H285 (proton acceptor) is an active-site residue. R286, H318, and S370 together coordinate substrate.

Belongs to the RuBisCO large chain family. Type I subfamily. As to quaternary structure, heterohexadecamer of 8 large chains and 8 small chains; disulfide-linked. The disulfide link is formed within the large subunit homodimers. Mg(2+) serves as cofactor. In terms of processing, the disulfide bond which can form in the large chain dimeric partners within the hexadecamer appears to be associated with oxidative stress and protein turnover.

It is found in the plastid. The protein resides in the chloroplast. It catalyses the reaction 2 (2R)-3-phosphoglycerate + 2 H(+) = D-ribulose 1,5-bisphosphate + CO2 + H2O. The catalysed reaction is D-ribulose 1,5-bisphosphate + O2 = 2-phosphoglycolate + (2R)-3-phosphoglycerate + 2 H(+). In terms of biological role, ruBisCO catalyzes two reactions: the carboxylation of D-ribulose 1,5-bisphosphate, the primary event in carbon dioxide fixation, as well as the oxidative fragmentation of the pentose substrate in the photorespiration process. Both reactions occur simultaneously and in competition at the same active site. The chain is Ribulose bisphosphate carboxylase large chain from Gonopterodendron arboreum (Maracaibo lignum-vitae).